Consider the following 260-residue polypeptide: UPF0294 protein YPO1077/y3099/YP_2772 (260 aa).

This sequence belongs to the UPF0294 family.

The protein resides in the cytoplasm. The sequence is that of UPF0294 protein YPO1077/y3099/YP_2772 from Yersinia pestis.